A 156-amino-acid chain; its full sequence is MSRRHAAEKREVLPDAKYGDRVLTKFMNNLMIDGKKSVAERIVYSALERVEGRVKRAPVEVFHEALDNVKPSVEVRSRRVGGATYQVPVEVRPSRREALAIRWLINAAKNRNENTMEERLAGELLDAMNSRGSAVKKREDTHKMADANKAFSHYRW.

This sequence belongs to the universal ribosomal protein uS7 family. As to quaternary structure, part of the 30S ribosomal subunit. Contacts proteins S9 and S11.

Its function is as follows. One of the primary rRNA binding proteins, it binds directly to 16S rRNA where it nucleates assembly of the head domain of the 30S subunit. Is located at the subunit interface close to the decoding center, probably blocks exit of the E-site tRNA. The chain is Small ribosomal subunit protein uS7 from Rhodobacter capsulatus (Rhodopseudomonas capsulata).